The following is a 170-amino-acid chain: NADH-quinone oxidoreductase subunit B (170 aa).

Residues Cys-46, Cys-47, Cys-111, and Cys-141 each coordinate [4Fe-4S] cluster.

The protein belongs to the complex I 20 kDa subunit family. NDH-1 is composed of 14 different subunits. Subunits NuoB, C, D, E, F, and G constitute the peripheral sector of the complex. [4Fe-4S] cluster is required as a cofactor.

It is found in the cell membrane. The enzyme catalyses a quinone + NADH + 5 H(+)(in) = a quinol + NAD(+) + 4 H(+)(out). In terms of biological role, NDH-1 shuttles electrons from NADH, via FMN and iron-sulfur (Fe-S) centers, to quinones in the respiratory chain. The immediate electron acceptor for the enzyme in this species is believed to be a menaquinone. Couples the redox reaction to proton translocation (for every two electrons transferred, four hydrogen ions are translocated across the cytoplasmic membrane), and thus conserves the redox energy in a proton gradient. In Geobacillus thermodenitrificans (strain NG80-2), this protein is NADH-quinone oxidoreductase subunit B.